The primary structure comprises 240 residues: Nicotinamide riboside kinase (240 aa).

13–21 (GCSSSGKTT) is an ATP binding site. The Mg(2+) site is built by T20 and D39. The active-site Proton acceptor is D39. Substrate-binding positions include 39-42 (DDFY) and 59-60 (WD). Position 158 (R158) interacts with ATP. Substrate is bound by residues R159 and 164–165 (GY). Residues 162 to 164 (RKG) and 208 to 210 (KSK) each bind ATP.

This sequence belongs to the uridine kinase family. NRK subfamily.

It catalyses the reaction beta-nicotinamide D-riboside + ATP = beta-nicotinamide D-ribonucleotide + ADP + H(+). The catalysed reaction is beta-D-ribosylnicotinate + ATP = nicotinate beta-D-ribonucleotide + ADP + H(+). The protein operates within cofactor biosynthesis; NAD(+) biosynthesis. Its function is as follows. Catalyzes the phosphorylation of nicotinamide riboside (NR) and nicotinic acid riboside (NaR) to form nicotinamide mononucleotide (NMN) and nicotinic acid mononucleotide (NaMN). This chain is Nicotinamide riboside kinase (NRK1), found in Saccharomyces cerevisiae (strain ATCC 204508 / S288c) (Baker's yeast).